We begin with the raw amino-acid sequence, 485 residues long: Subtilisin-like protease 1 (485 aa).

An N-terminal signal peptide occupies residues 1–19 (MGIFRFISISLAAVSAANA). A propeptide spanning residues 20 to 116 (GHILSMGHAK…VEPDTTITIH (97 aa)) is cleaved from the precursor. Residues 34 to 116 (SYIVVMKDGT…VEPDTTITIH (83 aa)) form the Inhibitor I9 domain. In terms of domain architecture, Peptidase S8 spans 126–400 (SWGLARISSQ…NILINNGDAK (275 aa)). Active-site charge relay system residues include Asp158 and His190. Residue Asn251 is glycosylated (N-linked (GlcNAc...) asparagine). Catalysis depends on Ser345, which acts as the Charge relay system. Residues 377-394 (GTSSVTNPGPGTRTNILI) are compositionally biased toward polar residues. The segment at 377-462 (GTSSVTNPGP…HTPFPNDDFN (86 aa)) is disordered. The span at 409–418 (PSQPPKPSQP) shows a compositional bias: pro residues. Over residues 419-428 (SKPQQPSEPQ) the composition is skewed to low complexity. Pro residues predominate over residues 433 to 455 (PQEPAPGQPAPAPAPVPQHPHTP).

This sequence belongs to the peptidase S8 family.

It localises to the secreted. Functionally, secreted subtilisin-like serine protease with keratinolytic activity that contributes to pathogenicity. The sequence is that of Subtilisin-like protease 1 (SUB1) from Arthroderma otae (Microsporum canis).